The chain runs to 233 residues: MSKLSKRMRVIREKVDTAKQYDLDDAFLLLKKLATAKFTESVDVAVNLGIDARKSDQNVRGATVLPHGTGRSVRVAVFTQGANAEAANNAGAELVGMDDLAAQIRNGEMNFDVVIASPDAMRVVGQLGQILGPRGLMPNPKVGTVTPNIAEAVTNAKAGQIRYRNDKNGIIHTTIGKIDFDAHKLKENLEALISALKKAKPATAKGLYIKKISLSTTMGAGLMIDQSALSSLV.

This sequence belongs to the universal ribosomal protein uL1 family. As to quaternary structure, part of the 50S ribosomal subunit.

In terms of biological role, binds directly to 23S rRNA. The L1 stalk is quite mobile in the ribosome, and is involved in E site tRNA release. Its function is as follows. Protein L1 is also a translational repressor protein, it controls the translation of the L11 operon by binding to its mRNA. This Hamiltonella defensa subsp. Acyrthosiphon pisum (strain 5AT) protein is Large ribosomal subunit protein uL1.